Reading from the N-terminus, the 480-residue chain is GTPase Obg (480 aa).

Residues 2-159 form the Obg domain; it reads TRFIDRVVIH…RDLTLELKTV (158 aa). Residues 160-341 form the OBG-type G domain; sequence ADVGLVGFPS…LTFALWDMVA (182 aa). GTP is bound by residues 166-173, 191-195, 212-215, 292-295, and 322-324; these read GFPSAGKS, FTTLA, DVPG, NKID, and STV. Ser-173 and Thr-193 together coordinate Mg(2+). The region spanning 359–437 is the OCT domain; sequence PIPVDETAFS…IGDMTFDWEP (79 aa). Positions 441 to 480 are disordered; sequence AGVDVPLTGRGTDVRLEQTDRVGADERKAARKARRQSGDE. Over residues 452-468 the composition is skewed to basic and acidic residues; that stretch reads TDVRLEQTDRVGADERK. The segment covering 469–480 has biased composition (basic residues); the sequence is AARKARRQSGDE.

It belongs to the TRAFAC class OBG-HflX-like GTPase superfamily. OBG GTPase family. In terms of assembly, monomer. Requires Mg(2+) as cofactor.

The protein resides in the cytoplasm. In terms of biological role, an essential GTPase which binds GTP, GDP and possibly (p)ppGpp with moderate affinity, with high nucleotide exchange rates and a fairly low GTP hydrolysis rate. Plays a role in control of the cell cycle, stress response, ribosome biogenesis and in those bacteria that undergo differentiation, in morphogenesis control. The polypeptide is GTPase Obg (Mycolicibacterium vanbaalenii (strain DSM 7251 / JCM 13017 / BCRC 16820 / KCTC 9966 / NRRL B-24157 / PYR-1) (Mycobacterium vanbaalenii)).